The primary structure comprises 91 residues: Putative regulatory protein PTH_1796 (91 aa).

Belongs to the RemA family.

In Pelotomaculum thermopropionicum (strain DSM 13744 / JCM 10971 / SI), this protein is Putative regulatory protein PTH_1796.